The following is a 549-amino-acid chain: Probable protein kinase UbiB (549 aa).

The region spanning 123–501 is the Protein kinase domain; the sequence is NFDDTPLASA…QQKAHKSNYL (379 aa). ATP contacts are provided by residues 129–137 and lysine 152; that span reads LASASISQV. Aspartate 287 serves as the catalytic Proton acceptor. 2 helical membrane-spanning segments follow: residues 498-518 and 520-540; these read SNYLLITSAVLVICGSILFSQ and ATLWASYACIGIGATLWLLGW.

This sequence belongs to the ABC1 family. UbiB subfamily.

It localises to the cell inner membrane. It functions in the pathway cofactor biosynthesis; ubiquinone biosynthesis [regulation]. Functionally, is probably a protein kinase regulator of UbiI activity which is involved in aerobic coenzyme Q (ubiquinone) biosynthesis. The chain is Probable protein kinase UbiB from Shewanella loihica (strain ATCC BAA-1088 / PV-4).